The sequence spans 333 residues: Protein translocase subunit SecF (333 aa).

Helical transmembrane passes span 27–47 (AIVM…NFGI), 152–172 (VWTA…YIWV), 180–200 (LGAV…FAVL), 207–227 (TTVA…VVVF), 253–275 (TLSR…LIWG), and 285–307 (AMVW…IVLF).

It belongs to the SecD/SecF family. SecF subfamily. In terms of assembly, forms a complex with SecD. Part of the essential Sec protein translocation apparatus which comprises SecA, SecYEG and auxiliary proteins SecDF-YajC and YidC.

It is found in the cell inner membrane. Part of the Sec protein translocase complex. Interacts with the SecYEG preprotein conducting channel. SecDF uses the proton motive force (PMF) to complete protein translocation after the ATP-dependent function of SecA. The polypeptide is Protein translocase subunit SecF (Rhodobacter capsulatus (strain ATCC BAA-309 / NBRC 16581 / SB1003)).